Consider the following 378-residue polypeptide: C-C chemokine receptor type 7 (378 aa).

An N-terminal signal peptide occupies residues 1-24; it reads MDLGKPMKSVLVVALLVIFQVCLC. At 25-59 the chain is on the extracellular side; sequence QDEVTDDYIGDNTTVDYTLFESLCSKKDVRNFKAW. N-linked (GlcNAc...) asparagine glycosylation occurs at asparagine 36. A helical membrane pass occupies residues 60–86; the sequence is FLPIMYSIICFVGLLGNGLVVLTYIYF. The Cytoplasmic portion of the chain corresponds to 87 to 95; sequence KRLKTMTDT. The chain crosses the membrane as a helical span at residues 96–116; sequence YLLNLAVADILFLLTLPFWAY. Topologically, residues 117–130 are extracellular; sequence SAAKSWVFGVHFCK. Cysteine 129 and cysteine 210 are disulfide-bonded. A helical transmembrane segment spans residues 131–152; that stretch reads LIFAIYKMSFFSGMLLLLCISI. The Cytoplasmic portion of the chain corresponds to 153-170; it reads DRYVAIVQAVSAHRHRAR. A helical membrane pass occupies residues 171–191; it reads VLLISKLSCVGIWILATVLSI. Topologically, residues 192-219 are extracellular; the sequence is PELLYSDLQRSSSEQAMRCSLITEHVEA. A helical membrane pass occupies residues 220–247; that stretch reads FITIQVAQMVIGFLVPLLAMSFCYLVII. Residues 248 to 263 lie on the Cytoplasmic side of the membrane; the sequence is RTLLQARNFERNKAIK. A helical transmembrane segment spans residues 264-289; it reads VIIAVVVVFIVFQLPYNGVVLAQTVA. At 290-313 the chain is on the extracellular side; sequence NFNITSSTCELSKQLNIAYDVTYS. A helical membrane pass occupies residues 314–331; sequence LACVRCCVNPFLYAFIGV. Residues 332–378 lie on the Cytoplasmic side of the membrane; sequence KFRNDLFKLFKDLGCLSQEQLRQWSSCRHIRRSSMSVEAETTTTFSP.

This sequence belongs to the G-protein coupled receptor 1 family. As to expression, expressed in various lymphoid tissues and activated B- and T-lymphocytes, strongly up-regulated in B-cells infected with Epstein-Barr virus and T-cells infected with herpesvirus 6 or 7.

The protein resides in the cell membrane. In terms of biological role, receptor for the MIP-3-beta chemokine. Probable mediator of EBV effects on B-lymphocytes or of normal lymphocyte functions. This is C-C chemokine receptor type 7 (CCR7) from Homo sapiens (Human).